The sequence spans 110 residues: uncharacterized protein (110 aa).

Over residues 1–16 (MSVKLKYDKIDQRNGD) the composition is skewed to basic and acidic residues. 2 disordered regions span residues 1–29 (MSVK…GNGN) and 73–100 (IKQQ…ESPN). Low complexity predominate over residues 20 to 29 (GNHNNCGNGN).

This is an uncharacterized protein from Dictyostelium discoideum (Social amoeba).